The sequence spans 732 residues: 1,4-alpha-glucan branching enzyme GlgB (732 aa).

The active-site Nucleophile is the Asp-409. The active-site Proton donor is the Glu-462.

It belongs to the glycosyl hydrolase 13 family. GlgB subfamily. In terms of assembly, monomer.

The catalysed reaction is Transfers a segment of a (1-&gt;4)-alpha-D-glucan chain to a primary hydroxy group in a similar glucan chain.. Its pathway is glycan biosynthesis; glycogen biosynthesis. In terms of biological role, catalyzes the formation of the alpha-1,6-glucosidic linkages in glycogen by scission of a 1,4-alpha-linked oligosaccharide from growing alpha-1,4-glucan chains and the subsequent attachment of the oligosaccharide to the alpha-1,6 position. The sequence is that of 1,4-alpha-glucan branching enzyme GlgB from Corynebacterium diphtheriae (strain ATCC 700971 / NCTC 13129 / Biotype gravis).